The primary structure comprises 1054 residues: MPRRDDIRSILIIGSGPIVIGQAAEFDYSGTQACRALKEEGYRVILVNSNPATIMTDPEMADTTYIEPLRAETVAEVIRRERPDALLPTLGGQTALNLAVELSEAGVLEEYGVQLLGASIPSIQKAEDRQLFREAMERIGLRVPESRTVRSVPEAEELAERIGFPLIIRPSFTLGGTGGSVAEDLDALRASVRDGLDASPVRSVLVERSVAGWKEFELEVMRDLADNVVIVCSIENVDPMGVHTGDSITVAPAQTLSDRQYQSLRTAAIRIIREIGVSTGGSNIQFAVNPEGDDFYVIEMNPRVSRSSALASKATGFPIAKIAARLAVGYTLDEITNDITGATPASFEPALDYVVTKIPRFAFEKFPGTSARLTTRMHSVGEVMAIGRTFTESLLKAMASLEIETRDIQARLDEPSPYRIFAVFEALRAGMDIPEIYRRTSIDPFFIAAAARIVAAEGAVEETLSAEQVRELKRMGFTDEALAACSGYPAEVVRGVRRALGVHPTYKAVDTCAGEFPARTPYYYSTYEQEDEVERGENPSVVVLGSGPNRIGQGIEFDYACVHASYELKACGYDAVMINSNPETVSTDYDTSSRLYFEPLTAEHVLEVVRRERPEGVILQFGGQSPLKLARELERAGARVLGTSPEAIDLAEDRSRFGRLLRELGIPHPRFGTATTAAEAREVARRLGYPVVVRPSYVLGGRRMEIVYGDEDLELYLRSSVSGSPEHPILVDKFMEAYVEVDVDAVSDGEEVYIGGIMEHIEEAGVHSGDSSCVTPPITLTRSLQERIEDYTRRLALSIGVVGLMNVQYVVRGDEVMAIECNPRASRTVPYISKATGVPLARLATRVLLGEKLRDLGPRPASSGSFAVKAPVFPFDRFAEVDPLLGPEMRSTGEAMGIDPTFGGAFAKALAAAGQRLPESGRVYVSVADRDKRAAVLIARGFADLGFEVLASEGTAGVLRNNGLPAAVVPKIGEGGEDVLGLIERGGVDLIVNTPWGRGSRTDGYLIRRKALMHRVPCITTLAGAAAALQGIEARIRGETRRVHSLQDLYAART.

The tract at residues 1-402 (MPRRDDIRSI…SLLKAMASLE (402 aa)) is carboxyphosphate synthetic domain. Positions 129, 169, 175, 176, 208, 210, 215, 241, 242, 243, 285, and 299 each coordinate ATP. The region spanning 133-328 (REAMERIGLR…IAKIAARLAV (196 aa)) is the ATP-grasp 1 domain. Mg(2+) contacts are provided by Gln-285, Glu-299, and Asn-301. Positions 285, 299, and 301 each coordinate Mn(2+). The interval 403–531 (IETRDIQARL…YYYSTYEQED (129 aa)) is oligomerization domain. A carbamoyl phosphate synthetic domain region spans residues 532–914 (EVERGENPSV…AFAKALAAAG (383 aa)). Residues 658–849 (GRLLRELGIP…LARLATRVLL (192 aa)) enclose the ATP-grasp 2 domain. ATP is bound by residues Arg-694, Lys-733, Glu-740, Gly-765, Val-766, His-767, Ser-768, Gln-808, and Glu-820. The Mg(2+) site is built by Gln-808, Glu-820, and Asn-822. Gln-808, Glu-820, and Asn-822 together coordinate Mn(2+). The 140-residue stretch at 915–1054 (QRLPESGRVY…SLQDLYAART (140 aa)) folds into the MGS-like domain. An allosteric domain region spans residues 915-1054 (QRLPESGRVY…SLQDLYAART (140 aa)).

The protein belongs to the CarB family. As to quaternary structure, composed of two chains; the small (or glutamine) chain promotes the hydrolysis of glutamine to ammonia, which is used by the large (or ammonia) chain to synthesize carbamoyl phosphate. Tetramer of heterodimers (alpha,beta)4. It depends on Mg(2+) as a cofactor. Requires Mn(2+) as cofactor.

It catalyses the reaction hydrogencarbonate + L-glutamine + 2 ATP + H2O = carbamoyl phosphate + L-glutamate + 2 ADP + phosphate + 2 H(+). The catalysed reaction is hydrogencarbonate + NH4(+) + 2 ATP = carbamoyl phosphate + 2 ADP + phosphate + 2 H(+). It participates in amino-acid biosynthesis; L-arginine biosynthesis; carbamoyl phosphate from bicarbonate: step 1/1. Its pathway is pyrimidine metabolism; UMP biosynthesis via de novo pathway; (S)-dihydroorotate from bicarbonate: step 1/3. Functionally, large subunit of the glutamine-dependent carbamoyl phosphate synthetase (CPSase). CPSase catalyzes the formation of carbamoyl phosphate from the ammonia moiety of glutamine, carbonate, and phosphate donated by ATP, constituting the first step of 2 biosynthetic pathways, one leading to arginine and/or urea and the other to pyrimidine nucleotides. The large subunit (synthetase) binds the substrates ammonia (free or transferred from glutamine from the small subunit), hydrogencarbonate and ATP and carries out an ATP-coupled ligase reaction, activating hydrogencarbonate by forming carboxy phosphate which reacts with ammonia to form carbamoyl phosphate. The protein is Carbamoyl phosphate synthase large chain of Rubrobacter xylanophilus (strain DSM 9941 / JCM 11954 / NBRC 16129 / PRD-1).